Here is a 439-residue protein sequence, read N- to C-terminus: C4-dicarboxylate transport protein (439 aa).

9 consecutive transmembrane segments (helical) span residues 9 to 29 (SLYA…HFLP), 45 to 65 (LIKM…IAGM), 77 to 97 (LALL…LIIV), 145 to 165 (AFAK…GFAL), 185 to 205 (VLFT…FGAM), 223 to 243 (LMGA…GIVT), 290 to 310 (VVGL…AIYL), 332 to 352 (TLLA…GSGF), and 353 to 373 (IVLA…LALI). Positions 417 to 439 (NESPQAADQPEKILDQTNTKLGA) are disordered.

Belongs to the dicarboxylate/amino acid:cation symporter (DAACS) (TC 2.A.23) family.

Its subcellular location is the cell inner membrane. Responsible for the transport of dicarboxylates such as succinate, fumarate, and malate from the periplasm across the membrane. This Janthinobacterium sp. (strain Marseille) (Minibacterium massiliensis) protein is C4-dicarboxylate transport protein.